Consider the following 353-residue polypeptide: Heterogeneous nuclear ribonucleoproteins A2/B1 (353 aa).

Position 1 is an N-acetylmethionine (methionine 1). A Phosphothreonine modification is found at threonine 4. Residues 9-15 (PLERKKR) carry the Nuclear localization signal motif. RRM domains follow at residues 21–104 (RKLF…ESGK) and 112–191 (KKLF…LSRQ). Lysine 22 is covalently cross-linked (Glycyl lysine isopeptide (Lys-Gly) (interchain with G-Cter in SUMO2)). Serine 29 bears the Phosphoserine mark. At arginine 38 the chain carries Omega-N-methylarginine. Position 85 is a phosphoserine (serine 85). The residue at position 104 (lysine 104) is an N6,N6-dimethyllysine; alternate. A Glycyl lysine isopeptide (Lys-Gly) (interchain with G-Cter in SUMO2); alternate cross-link involves residue lysine 104. Glycyl lysine isopeptide (Lys-Gly) (interchain with G-Cter in SUMO2) cross-links involve residues lysine 112, lysine 120, and lysine 137. Position 140 is a phosphothreonine (threonine 140). Phosphoserine is present on serine 149. A Glycyl lysine isopeptide (Lys-Gly) (interchain with G-Cter in SUMO2) cross-link involves residue lysine 152. Phosphothreonine is present on threonine 159. Residues lysine 168 and lysine 173 each participate in a glycyl lysine isopeptide (Lys-Gly) (interchain with G-Cter in SUMO2); alternate cross-link. Residues lysine 168 and lysine 173 each carry the N6-acetyllysine; alternate modification. The residue at position 176 (threonine 176) is a Phosphothreonine. A Glycyl lysine isopeptide (Lys-Gly) (interchain with G-Cter in SUMO2) cross-link involves residue lysine 186. Residues serine 189 and serine 201 each carry the phosphoserine modification. A disordered region spans residues 193 to 353 (MQEVQSSRSG…SGGYGGRSRY (161 aa)). The segment covering 202 to 223 (GRGGNFGFGDSRGGGGNFGPGP) has biased composition (gly residues). The residue at position 203 (arginine 203) is an Asymmetric dimethylarginine; alternate. Arginine 203 is subject to Dimethylated arginine; alternate. Arginine 203 carries the post-translational modification Omega-N-methylarginine; alternate. Serine 212 carries the post-translational modification Phosphoserine. Arginine 213 carries the asymmetric dimethylarginine; alternate modification. Position 213 is a dimethylated arginine; alternate (arginine 213). Arginine 213 is modified (omega-N-methylarginine; alternate). Serine 225 carries the phosphoserine modification. An Omega-N-methylarginine modification is found at arginine 228. Phosphoserine is present on residues serine 231 and serine 236. Position 238 is an omega-N-methylarginine (arginine 238). The residue at position 259 (serine 259) is a Phosphoserine. Arginine 266 bears the Asymmetric dimethylarginine; alternate mark. Arginine 266 carries the omega-N-methylarginine; alternate modification. Residues 308–347 (QQPSNYGPMKSGNFGGSRNMGGPYGGGNYGPGGSGGSGGY) are nuclear targeting sequence. Positions 320–353 (NFGGSRNMGGPYGGGNYGPGGSGGSGGYGGRSRY) are enriched in gly residues. Serine 324 carries the phosphoserine modification. Arginine 325 is modified (omega-N-methylarginine). Position 331 is a phosphotyrosine (tyrosine 331). Serine 341 and serine 344 each carry phosphoserine. A Phosphotyrosine modification is found at tyrosine 347. Arginine 350 carries the post-translational modification Omega-N-methylarginine.

In terms of assembly, homodimer; dimerization is required for nucleocytoplasmic translocation. Identified in the spliceosome C complex. Identified in a IGF2BP1-dependent mRNP granule complex containing untranslated mRNAs. Interacts with IGF2BP1. Interacts with C9orf72. Interacts with DGCR8. Interacts with TARDBP. Interacts with CKAP5. Interacts with TBK1. Interacts with STING1. Interacts with SRC. Interacts with PPIA/CYPA. Interacts (via C-terminus) with FAM76B; the interaction results in retention of HNRNPA2B1 in the nucleus and inhibition of the NF-kappa-B-mediated inflammatory pathway. Interacts with NF-kappa-B inhibitors NFKBIA and NFKBIE; the interaction may be mediated by the RRM2 domain of HNRNPA2B1, and HNRNPA2B1 may interact simultaneously with FAM76B and either NFKBIA or NFKBIE to form a complex. Asymmetric dimethylation at Arg-266 constitutes the major methylation site. According to a report, methylation affects subcellular location and promotes nuclear localization. According to another report, methylation at Arg-266 does not influence nucleocytoplasmic shuttling. Post-translationally, sumoylated in exosomes, promoting miRNAs-binding. In the brain, isoform A2 and isoform B1 are abundant in large ganglion-type neurons, such as Purkinje cells, and are less abundant in neighboring glia cells. Isoform A2 is more abundant than isoform B1 in brain. In testis, isoform A2 and isoform B1 are present in spermatogonia and spermatocytes, but not in spermatids or sperm. Isoform A2 is more abundant in the adrenal medulla than in the cortical cells. Isoform B1 is found in both adrenal medulla and cortical cells. Isoform A2 is more abundant than isoform B1 in the adrenal gland. Isoform A2 and isoform B1 are both detected in pancreas and kidney, and at lower levels in heart and lung. Isoform B1 is more abundant than isoform A2 in heart, lung and intestine (at protein level). Isoform A2b and isoform B1b are testis-specific.

The protein localises to the nucleus. It localises to the cytoplasm. The protein resides in the nucleoplasm. Its subcellular location is the cytoplasmic granule. It is found in the secreted. The protein localises to the extracellular exosome. In terms of biological role, heterogeneous nuclear ribonucleoprotein (hnRNP) that associates with nascent pre-mRNAs, packaging them into hnRNP particles. The hnRNP particle arrangement on nascent hnRNA is non-random and sequence-dependent and serves to condense and stabilize the transcripts and minimize tangling and knotting. Packaging plays a role in various processes such as transcription, pre-mRNA processing, RNA nuclear export, subcellular location, mRNA translation and stability of mature mRNAs. Forms hnRNP particles with at least 20 other different hnRNP and heterogeneous nuclear RNA in the nucleus. Involved in transport of specific mRNAs to the cytoplasm in oligodendrocytes and neurons: acts by specifically recognizing and binding the A2RE (21 nucleotide hnRNP A2 response element) or the A2RE11 (derivative 11 nucleotide oligonucleotide) sequence motifs present on some mRNAs, and promotes their transport to the cytoplasm. Specifically binds single-stranded telomeric DNA sequences, protecting telomeric DNA repeat against endonuclease digestion. Also binds other RNA molecules, such as primary miRNA (pri-miRNAs): acts as a nuclear 'reader' of the N6-methyladenosine (m6A) mark by specifically recognizing and binding a subset of nuclear m6A-containing pri-miRNAs. Binding to m6A-containing pri-miRNAs promotes pri-miRNA processing by enhancing binding of DGCR8 to pri-miRNA transcripts. Involved in miRNA sorting into exosomes following sumoylation, possibly by binding (m6A)-containing pre-miRNAs. Acts as a regulator of efficiency of mRNA splicing, possibly by binding to m6A-containing pre-mRNAs. Plays a role in the splicing of pyruvate kinase PKM by binding repressively to sequences flanking PKM exon 9, inhibiting exon 9 inclusion and resulting in exon 10 inclusion and production of the PKM M2 isoform. Also plays a role in the activation of the innate immune response. Mechanistically, senses the presence of viral DNA in the nucleus, homodimerizes and is demethylated by JMJD6. In turn, translocates to the cytoplasm where it activates the TBK1-IRF3 pathway, leading to interferon alpha/beta production. The protein is Heterogeneous nuclear ribonucleoproteins A2/B1 of Rattus norvegicus (Rat).